The primary structure comprises 201 residues: Female-specific protein transformer (201 aa).

Residues 1–117 (MDADSSSRSP…RSRSRSRTPR (117 aa)) are disordered. The span at 9–37 (SPRDTRTCARPKEKVPYFADEGRERDRVR) shows a compositional bias: basic and acidic residues. Basic residues-rich tracts occupy residues 38–62 (NLRH…RARS) and 99–115 (KQRR…RSRT).

It is found in the nucleus speckle. In terms of biological role, member of the regulatory pathway controlling female somatic sexual differentiation, regulated by Sxl. Activates dsx female-specific splicing by promoting the formation of a splicing enhancer complex which consists of tra, tra2 and sr proteins. The sequence is that of Female-specific protein transformer (tra) from Drosophila hydei (Fruit fly).